Consider the following 800-residue polypeptide: Protein SPT2 homolog (800 aa).

Positions 1 to 687 (MDFHSVLRMA…PGHRPNMQPP (687 aa)) are important for interaction with DNA. The stretch at 53–82 (QEIQNKEVEAKRKKEGLLAKRKELKHDRKA) forms a coiled coil. Disordered regions lie at residues 70-173 (LAKR…PALN), 197-646 (KEER…MAKP), and 661-698 (VPKS…TSSY). A compositionally biased stretch (acidic residues) spans 124-137 (TEEDEEYMTEEELY). Low complexity predominate over residues 155-164 (PQKVAKAAPG). Positions 196 to 224 (KKEERLRTAEELKELEFLERKAQKADRKD) form a coiled coil. Composition is skewed to basic and acidic residues over residues 197 to 226 (KEER…KDPM) and 249 to 259 (HSVEKRSHENS). Polar residues predominate over residues 260-272 (KSSSTEQNGTFRK). The segment covering 273-295 (SSSDNRSREEKSGSVFHTKDSKF) has biased composition (basic and acidic residues). 5 stretches are compositionally biased toward low complexity: residues 328–360 (SGST…SSGK), 367–377 (SSSARSSSGSG), 390–424 (GASG…SVGA), 443–501 (GVSG…SVSG), and 514–581 (GAPG…ASSS). Over residues 608 to 626 (NSVRHNTTSISVSARSSLG) the composition is skewed to polar residues. Residues 684-693 (MQPPGRPLPP) show a composition bias toward pro residues. The interval 688-800 (GRPLPPITSS…LKSAKKMKSR (113 aa)) is important for interaction with histones. Residues 756-800 (REQQKEEARSLRLGIQEDLEELRREEEELKQKAKQLKSAKKMKSR) are a coiled coil.

This sequence belongs to the SPT2 family. As to quaternary structure, interacts with histones. Interacts with a heterotetrameric complex formed by histone H3 and H4, especially when the histone tetramer is not bound to DNA.

The protein resides in the nucleus. The protein localises to the nucleolus. Its function is as follows. Histone chaperone that stabilizes pre-existing histone tetramers and regulates replication-independent histone exchange on chromatin. Required for normal chromatin refolding in the coding region of transcribed genes, and for the suppression of spurious transcription. Binds DNA and histones and promotes nucleosome assembly (in vitro). Facilitates formation of tetrameric histone complexes containing histone H3 and H4. Modulates RNA polymerase 1-mediated transcription. Binds DNA, with a preference for branched DNA species, such as Y-form DNA and Holliday junction DNA. This Xenopus laevis (African clawed frog) protein is Protein SPT2 homolog (spty2d1).